An 886-amino-acid chain; its full sequence is Microsomal triacylglycerol transfer protein (886 aa).

The signal sequence occupies residues 1-27 (MENKNKKCLRTLLLLALFLGLLEDGKT). Residues 30–653 (IAPNSQQIFK…SQASSFKLGI (624 aa)) form the Vitellogenin domain. N358, N484, N502, and N616 each carry an N-linked (GlcNAc...) asparagine glycan.

The protein resides in the endoplasmic reticulum. It is found in the golgi apparatus. It catalyses the reaction a 1,2-diacyl-sn-glycero-3-phosphocholine(in) = a 1,2-diacyl-sn-glycero-3-phosphocholine(out). It carries out the reaction a 1,2-diacyl-sn-glycero-3-phosphoethanolamine(in) = a 1,2-diacyl-sn-glycero-3-phosphoethanolamine(out). Its function is as follows. Catalyzes the transport of phospholipids such as phosphatidylethanolamine (1,2-diacyl-sn-glycero-3-phosphoethanolamine) and phosphatidylcholine (1,2-diacyl-sn-glycero-3-phosphocholine) between membranes. Required for the assembly and secretion of plasma lipoproteins that contain apolipoprotein B. The sequence is that of Microsomal triacylglycerol transfer protein from Drosophila melanogaster (Fruit fly).